The primary structure comprises 434 residues: ATP phosphoribosyltransferase regulatory subunit (434 aa).

Residues 1–48 (MYGRGSGAEHSRGSGAEHFWDPRPEASSTVSSSLRPPSGARDLLPREV) form a disordered region. A compositionally biased stretch (low complexity) spans 27–38 (SSTVSSSLRPPS).

It belongs to the class-II aminoacyl-tRNA synthetase family. HisZ subfamily. Heteromultimer composed of HisG and HisZ subunits.

The protein localises to the cytoplasm. It functions in the pathway amino-acid biosynthesis; L-histidine biosynthesis; L-histidine from 5-phospho-alpha-D-ribose 1-diphosphate: step 1/9. In terms of biological role, required for the first step of histidine biosynthesis. May allow the feedback regulation of ATP phosphoribosyltransferase activity by histidine. This is ATP phosphoribosyltransferase regulatory subunit from Synechococcus sp. (strain JA-2-3B'a(2-13)) (Cyanobacteria bacterium Yellowstone B-Prime).